A 179-amino-acid polypeptide reads, in one-letter code: MNATPASADDLIVIGKIYSVHGVRGEVKVYSFTDPIGNLLDYKTWTLRREGSVEKQVELVSGRLQSKFLVVKLKGLDDREEARLLSGYEICVPRNLFPDLDDGEYYWYQLEGLKVIDQLGQLLGKIDHLLETGSNDVMVVKPCAGSLDDRERLLPYTEQCVLAIDMAAGEMKVEWDADF.

The region spanning 102 to 179 is the PRC barrel domain; that stretch reads DGEYYWYQLE…EMKVEWDADF (78 aa).

The protein belongs to the RimM family. As to quaternary structure, binds ribosomal protein uS19.

Its subcellular location is the cytoplasm. Functionally, an accessory protein needed during the final step in the assembly of 30S ribosomal subunit, possibly for assembly of the head region. Essential for efficient processing of 16S rRNA. May be needed both before and after RbfA during the maturation of 16S rRNA. It has affinity for free ribosomal 30S subunits but not for 70S ribosomes. This Pseudomonas syringae pv. tomato (strain ATCC BAA-871 / DC3000) protein is Ribosome maturation factor RimM.